The sequence spans 344 residues: Ferrochelatase (344 aa).

2 residues coordinate Fe cation: H214 and E295.

It belongs to the ferrochelatase family.

The protein localises to the cytoplasm. It carries out the reaction heme b + 2 H(+) = protoporphyrin IX + Fe(2+). It functions in the pathway porphyrin-containing compound metabolism; protoheme biosynthesis; protoheme from protoporphyrin-IX: step 1/1. In terms of biological role, catalyzes the ferrous insertion into protoporphyrin IX. The chain is Ferrochelatase from Rhizobium etli (strain ATCC 51251 / DSM 11541 / JCM 21823 / NBRC 15573 / CFN 42).